Reading from the N-terminus, the 164-residue chain is LWamide neuropeptides (164 aa).

Residues 1–6 (RSADAQ) constitute a propeptide that is removed on maturation. A disordered region spans residues 1-92 (RSADAQQHGL…WGRSADAQQP (92 aa)). 2 positions are modified to tryptophan amide: tryptophan 11 and tryptophan 20. A propeptide spanning residues 23–27 (SADAQ) is cleaved from the precursor. Tryptophan 32 and tryptophan 41 each carry tryptophan amide. Positions 44-49 (SAEPGQ) are excised as a propeptide. Tryptophan 53 and tryptophan 62 each carry tryptophan amide. A propeptide spanning residues 65-70 (SAEPLQ) is cleaved from the precursor. 2 positions are modified to tryptophan amide: tryptophan 74 and tryptophan 83. Residues 86-90 (SADAQ) constitute a propeptide that is removed on maturation. Tryptophan amide occurs at positions 95, 106, and 115. Residues 118–123 (SADPGQ) constitute a propeptide that is removed on maturation. Tryptophan amide is present on residues tryptophan 127 and tryptophan 137. Residues 140–164 (SYEPPQFEDLEDLKKKSAIPKPSEQ) constitute a propeptide that is removed on maturation.

Belongs to the LWamide neuropeptide family.

It is found in the secreted. Functionally, metamorphosin A may be part of an internal signaling system involved in control of metamorphosis. This is LWamide neuropeptides from Actinia equina (Beadlet anemone).